Consider the following 140-residue polypeptide: Profilin (140 aa).

Serine 2 carries the post-translational modification N-acetylserine.

The protein belongs to the profilin family. Occurs in many kinds of cells as a complex with monomeric actin in a 1:1 ratio.

Its subcellular location is the cytoplasm. The protein localises to the cytoskeleton. In terms of biological role, binds to actin and affects the structure of the cytoskeleton. At high concentrations, profilin prevents the polymerization of actin, whereas it enhances it at low concentrations. By binding to PIP2, it inhibits the formation of IP3 and DG. In Clypeaster japonicus (Sand dollar), this protein is Profilin.